The chain runs to 464 residues: Non-neuronal cytoplasmic intermediate filament protein (464 aa).

A compositionally biased stretch (polar residues) spans 1-14 (MSTQTKKVTRTIIT). Residues 1-59 (MSTQTKKVTRTIITSSSGGGGGGGGGRASYSSSGRFSGGGGRMRAGGVTSRRSVGSSYS) are disordered. The head stretch occupies residues 1 to 101 (MSTQTKKVTR…RMTRAHEKQE (101 aa)). Over residues 17–27 (SGGGGGGGGGR) the composition is skewed to gly residues. The segment covering 45–59 (AGGVTSRRSVGSSYS) has biased composition (low complexity). Residues 98 to 413 (EKQELSHLND…KLLEGEEIRL (316 aa)) form the IF rod domain. Positions 102 to 133 (LSHLNDRFASYIDKVRYLQERNSKLEAQIKIQ) are coil 1A. A linker 1 region spans residues 134–144 (ESREAPNIKDL). Residues 145 to 237 (YEKELRDLRA…FLKRVHDEEI (93 aa)) form a coil 1B region. The linker 2 stretch occupies residues 238-264 (RQLQDQLNESLTIVEVDSRAASTFAPG). Residues 265–413 (PDLTEALREI…KLLEGEEIRL (149 aa)) are coil 2. The segment at 414–464 (FGESKEGVQQTSSSSSSSYQYSMKSGSGGGGGGSSSGKQQVTVSVSSGEEK) is tail. The segment at 415–464 (GESKEGVQQTSSSSSSSYQYSMKSGSGGGGGGSSSGKQQVTVSVSSGEEK) is disordered. Positions 420-438 (GVQQTSSSSSSSYQYSMKS) are enriched in low complexity. Gly residues predominate over residues 439-448 (GSGGGGGGSS). The segment covering 449–464 (SGKQQVTVSVSSGEEK) has biased composition (low complexity).

This sequence belongs to the intermediate filament family. Can form homopolymers.

It is found in the cytoplasm. The sequence is that of Non-neuronal cytoplasmic intermediate filament protein from Branchiostoma lanceolatum (Common lancelet).